The following is a 303-amino-acid chain: Monoglyceride lipase (303 aa).

Thr10 carries the phosphothreonine modification. The residue at position 58 (Tyr58) is a 3'-nitrotyrosine. The Nucleophile role is filled by Ser122. At Ser189 the chain carries Phosphoserine. Residues Asp239 and His269 each act as charge relay system in the active site.

Belongs to the AB hydrolase superfamily. Monoacylglycerol lipase family. As to quaternary structure, homodimer. In terms of tissue distribution, ubiquitous. Highly expressed in adipose tissue, adrenal gland, ovary, heart, spleen, lung, skeletal muscle, kidney and testis. Highly expressed throughout the brain.

The protein resides in the cytoplasm. It is found in the cytosol. It localises to the membrane. The catalysed reaction is Hydrolyzes glycerol monoesters of long-chain fatty acids.. It catalyses the reaction a 1-acylglycerol + H2O = glycerol + a fatty acid + H(+). The enzyme catalyses a 2-acylglycerol + H2O = glycerol + a fatty acid + H(+). It carries out the reaction 1-octanoylglycerol + H2O = octanoate + glycerol + H(+). The catalysed reaction is 2-(5Z,8Z,11Z,14Z-eicosatetraenoyl)-glycerol + H2O = glycerol + (5Z,8Z,11Z,14Z)-eicosatetraenoate + H(+). It catalyses the reaction 1-decanoylglycerol + H2O = decanoate + glycerol + H(+). The enzyme catalyses 1-dodecanoylglycerol + H2O = dodecanoate + glycerol + H(+). It carries out the reaction 1-tetradecanoylglycerol + H2O = tetradecanoate + glycerol + H(+). The catalysed reaction is 2-hexadecanoylglycerol + H2O = glycerol + hexadecanoate + H(+). It catalyses the reaction 1-(9Z-octadecenoyl)-glycerol + H2O = glycerol + (9Z)-octadecenoate + H(+). The enzyme catalyses 2-(9Z-octadecenoyl)-glycerol + H2O = glycerol + (9Z)-octadecenoate + H(+). It carries out the reaction 2-(9Z,12Z-octadecadienoyl)-glycerol + H2O = (9Z,12Z)-octadecadienoate + glycerol + H(+). The catalysed reaction is 1-(5Z,8Z,11Z,14Z-eicosatetraenoyl)-glycerol + H2O = glycerol + (5Z,8Z,11Z,14Z)-eicosatetraenoate + H(+). It catalyses the reaction 1-(9Z,12Z-octadecadienoyl)-glycerol + H2O = (9Z,12Z)-octadecadienoate + glycerol + H(+). The enzyme catalyses 1-hexadecanoylglycerol + H2O = glycerol + hexadecanoate + H(+). It carries out the reaction 1-octadecanoylglycerol + H2O = octadecanoate + glycerol + H(+). The catalysed reaction is prostaglandin E2 1-glyceryl ester + H2O = prostaglandin E2 + glycerol + H(+). It catalyses the reaction prostaglandin D2-1-glycerol ester + H2O = prostaglandin D2 + glycerol + H(+). The enzyme catalyses 2-glyceryl-15-deoxy-Delta(12,14)-prostaglandin J2 + H2O = 15-deoxy-Delta(12,14)-prostaglandin J2 + glycerol + H(+). It carries out the reaction prostaglandin F2alpha 1-glyceryl ester + H2O = prostaglandin F2alpha + glycerol + H(+). It participates in glycerolipid metabolism; triacylglycerol degradation. Its function is as follows. Converts monoacylglycerides to free fatty acids and glycerol. Hydrolyzes the endocannabinoid 2-arachidonoylglycerol, and thereby contributes to the regulation of endocannabinoid signaling, nociperception and perception of pain. Regulates the levels of fatty acids that serve as signaling molecules and promote cancer cell migration, invasion and tumor growth. The polypeptide is Monoglyceride lipase (Rattus norvegicus (Rat)).